The primary structure comprises 919 residues: Phosphoenolpyruvate carboxylase (919 aa).

Residues H138 and K579 contribute to the active site.

The protein belongs to the PEPCase type 1 family. Mg(2+) serves as cofactor.

It catalyses the reaction oxaloacetate + phosphate = phosphoenolpyruvate + hydrogencarbonate. Activity not stimulated by acetyl-CoA in the absence of any allosteric inhibitor, while the corresponding protein from E.coli is strongly stimulated. Forms oxaloacetate, a four-carbon dicarboxylic acid source for the tricarboxylic acid cycle. The chain is Phosphoenolpyruvate carboxylase (ppc) from Corynebacterium glutamicum (strain ATCC 13032 / DSM 20300 / JCM 1318 / BCRC 11384 / CCUG 27702 / LMG 3730 / NBRC 12168 / NCIMB 10025 / NRRL B-2784 / 534).